The chain runs to 1285 residues: Peroxidasin homolog pxn-1 (1285 aa).

A signal peptide spans 1 to 20 (MNLYLLLLVIATSSWQFVAG). The region spanning 21 to 53 (LECPVECTCDKKGLVVDCSSSGLTRIPKNISRN) is the LRRNT domain. LRR repeat units lie at residues 27–49 (CTCD…IPKN), 50–72 (ISRN…RSDL), 73–96 (EGFN…ENVL), 97–120 (DHLP…PLCS), 122–143 (SRPL…EQVL), 145–168 (YFPD…KLFD), and 204–227 (KVYC…SALT). The N-linked (GlcNAc...) asparagine glycan is linked to asparagine 49. One can recognise an LRRCT domain in the interval 180 to 228 (SNPWHCDCRASKVKALLQKVKWEKKVYCTNPVELRHQALDEVDDSALTC). N-linked (GlcNAc...) asparagine glycosylation is present at asparagine 248. The tract at residues 305–324 (RQSQHQGNGSPQFTYKPRDN) is disordered. A compositionally biased stretch (polar residues) spans 307–317 (SQHQGNGSPQF). Ig-like C2-type domains are found at residues 315–401 (PQFT…FSLD) and 408–495 (PNIY…AKLT). 2 cysteine pairs are disulfide-bonded: cysteine 336–cysteine 385 and cysteine 429–cysteine 479. A coiled-coil region spans residues 508 to 550 (QIDEELLRAIAQKARQNVENAVEKTRKQLTQDKVTNTNDLKRL). An N-linked (GlcNAc...) asparagine glycan is attached at asparagine 595. A disulfide bridge connects residues cysteine 625 and cysteine 641. Aspartate 719 provides a ligand contact to heme b. Histidine 720 functions as the Proton acceptor in the catalytic mechanism. Position 721 (aspartate 721) interacts with Ca(2+). 2 disulfide bridges follow: cysteine 740-cysteine 750 and cysteine 744-cysteine 771. Asparagine 741 is a glycosylation site (N-linked (GlcNAc...) asparagine). Residues threonine 803, phenylalanine 805, aspartate 807, and serine 809 each coordinate Ca(2+). Asparagine 858 carries an N-linked (GlcNAc...) asparagine glycan. Positions 877 and 973 each coordinate heme b. 2 LRR repeats span residues 998-1022 (HKAF…GLFA) and 1049-1073 (VSLD…TEYR). 2 disulfides stabilise this stretch: cysteine 1076–cysteine 1133 and cysteine 1174–cysteine 1201. An LRR 12 repeat occupies 1168 to 1189 (TLARLFCDNGDNIDRIQKDVFM).

The protein belongs to the peroxidase family. XPO subfamily. Ca(2+) is required as a cofactor. Requires heme b as cofactor. Expressed in the ventral nerve cord, the dorsal nerve cord, head neurons, GABAergic and cholinergic neurons, body wall muscles, vulval muscles, uterine muscles, intestine, the hypodermis and in coelomocytes.

It is found in the secreted. The protein resides in the extracellular space. Its subcellular location is the extracellular matrix. The catalysed reaction is L-lysyl-[collagen] + L-methionyl-[collagen] + H2O2 = [collagen]-L-lysyl-N-S-L-methionyl-[collagen] + 2 H2O + H(+). It carries out the reaction bromide + H2O2 = hypobromite + H2O. The enzyme catalyses L-lysyl-[collagen] + L-methionyl-[collagen] + hypobromite = [collagen]-L-lysyl-N-S-L-methionyl-[collagen] + bromide + H2O + H(+). It catalyses the reaction L-tyrosyl-[protein] + bromide + H2O2 + H(+) = 3-bromo-L-tyrosyl-[protein] + 2 H2O. The catalysed reaction is hypobromite + L-tyrosyl-[protein] + H(+) = 3-bromo-L-tyrosyl-[protein] + H2O. In terms of biological role, catalyzes the two-electron oxidation of bromide by hydrogen peroxide and generates hypobromite as a reactive intermediate which mediates the formation of sulfilimine cross-links between methionine and hydroxylysine residues within an uncross-linked collagen IV NC1 hexamer. Plays a role in the attachment of tissues and in axonal guidance during early developmental stages. May functionally antagonize the peroxidasin pxn-2 to maintain neuronal development. The chain is Peroxidasin homolog pxn-1 from Caenorhabditis elegans.